We begin with the raw amino-acid sequence, 126 residues long: Holo-[acyl-carrier-protein] synthase (126 aa).

Asp-8 and Glu-60 together coordinate Mg(2+).

The protein belongs to the P-Pant transferase superfamily. AcpS family. Mg(2+) serves as cofactor.

Its subcellular location is the cytoplasm. The enzyme catalyses apo-[ACP] + CoA = holo-[ACP] + adenosine 3',5'-bisphosphate + H(+). Functionally, transfers the 4'-phosphopantetheine moiety from coenzyme A to a Ser of acyl-carrier-protein. In Ehrlichia canis (strain Jake), this protein is Holo-[acyl-carrier-protein] synthase.